We begin with the raw amino-acid sequence, 350 residues long: Ion-translocating oxidoreductase complex subunit D (350 aa).

Transmembrane regions (helical) follow at residues 25-45 (ALCL…GSLI), 89-109 (IPPL…IIIV), and 124-144 (AMAG…SWVA). FMN phosphoryl threonine is present on T185. A run of 5 helical transmembrane segments spans residues 212–232 (SYGV…LVLL), 239–259 (WHIS…GFLI), 265–285 (VSPL…FIAT), 298–318 (LIFG…GGYP), and 319–339 (DAVA…DHYV).

Belongs to the NqrB/RnfD family. In terms of assembly, the complex is composed of six subunits: RnfA, RnfB, RnfC, RnfD, RnfE and RnfG. FMN serves as cofactor.

It is found in the cell inner membrane. Its function is as follows. Part of a membrane-bound complex that couples electron transfer with translocation of ions across the membrane. This Shewanella denitrificans (strain OS217 / ATCC BAA-1090 / DSM 15013) protein is Ion-translocating oxidoreductase complex subunit D.